The primary structure comprises 81 residues: Sulfur carrier protein TusA (81 aa).

Catalysis depends on Cys-19, which acts as the Cysteine persulfide intermediate.

This sequence belongs to the sulfur carrier protein TusA family.

It localises to the cytoplasm. Its function is as follows. Sulfur carrier protein which probably makes part of a sulfur-relay system. The sequence is that of Sulfur carrier protein TusA from Shewanella frigidimarina (strain NCIMB 400).